We begin with the raw amino-acid sequence, 723 residues long: MGDQQNAGKCPVMHGAMTSAGKSNMDWWPNNLNLDILHQHDRKTNPMGEDFDYREEVQKLDFDAVKKDLTELMTNSQDWWPADWGHYGGLMIRMAWHAAGSYRVADGRGGGGTGNQRFAPINSWPDNANLDKARRLLWPIKKKYGNKLSWADLIILAGNVAYESMGFKTFGFSFGREDIWHPEKDTYWGSEKEWLAPSDNPESRYSGDRESLENPLAAVMMGLIYVNPEGVDGNPDPLKTAEDVRVTFARMAMNDEETVALTAGGHTVGKCHGNGDAEKIGPEPEAADVEEQGLGWRNLASRGVGRDTVTSGLEGAWTTHPTRWDDGYFDMLLNHEWELTKSPAGAWQWQPVDIKEEDMPVDVEDPSIRHMPMMTDADMAMKMDPEYRKYAERFQKDPEYFNEVFARAWFKLIHRDMGPKTRYIGPEAPDEDLIWQDPVPAGNTGYDVDAVKAKIADSGLSISEMVATAWDSARTFRGSDYRGGANGARIRLAPQKDWEGNEPERLSKVLGVLEGIAADTGASVADTIVLAGNVGIEQAAKAAGHDITVPFAPGRGDASQEMTDEESFEYLEPLSDGYRNWLKKDYAVAPEEMMLDRTQLLGLTAPEMTVLIGGMRVLGTNHGGTQHGVFTDREGQLTNDFFVNLTDMNYAWEPVGNNLYEIRDRKTGETRWTATRVDLVFGSNSILRSYAEVYAQDDNKEKFVKDFVAAWNKVMNADRFDLA.

Positions 96–225 (WHAAGSYRVA…LAAVMMGLIY (130 aa)) form a cross-link, tryptophyl-tyrosyl-methioninium (Trp-Tyr) (with M-251). H97 functions as the Proton acceptor in the catalytic mechanism. Positions 225-251 (YVNPEGVDGNPDPLKTAEDVRVTFARM) form a cross-link, tryptophyl-tyrosyl-methioninium (Tyr-Met) (with W-96). Position 266 (H266) interacts with heme b.

The protein belongs to the peroxidase family. Peroxidase/catalase subfamily. In terms of assembly, homodimer or homotetramer. Requires heme b as cofactor. In terms of processing, formation of the three residue Trp-Tyr-Met cross-link is important for the catalase, but not the peroxidase activity of the enzyme.

The enzyme catalyses H2O2 + AH2 = A + 2 H2O. It catalyses the reaction 2 H2O2 = O2 + 2 H2O. Functionally, bifunctional enzyme with both catalase and broad-spectrum peroxidase activity. This is Catalase-peroxidase from Alkalilimnicola ehrlichii (strain ATCC BAA-1101 / DSM 17681 / MLHE-1).